A 316-amino-acid chain; its full sequence is Protoheme IX farnesyltransferase (316 aa).

The interval 1–21 (MAKSQALGNAPLTSTVAENAT) is disordered. Over residues 11–21 (PLTSTVAENAT) the composition is skewed to polar residues. Transmembrane regions (helical) follow at residues 42–62 (VVAM…PGIP), 67–87 (VILG…FNHV), 115–135 (VVFA…LNAL), 136–156 (TAWL…VWLK), 163–183 (IVIG…AVTG), 189–209 (ALLL…ALAI), 235–255 (MVLL…LTGM), 256–276 (SGGV…GYAL), and 295–315 (IWHL…TSLM).

It belongs to the UbiA prenyltransferase family. Protoheme IX farnesyltransferase subfamily.

The protein resides in the cell inner membrane. It catalyses the reaction heme b + (2E,6E)-farnesyl diphosphate + H2O = Fe(II)-heme o + diphosphate. Its pathway is porphyrin-containing compound metabolism; heme O biosynthesis; heme O from protoheme: step 1/1. Its function is as follows. Converts heme B (protoheme IX) to heme O by substitution of the vinyl group on carbon 2 of heme B porphyrin ring with a hydroxyethyl farnesyl side group. The polypeptide is Protoheme IX farnesyltransferase (Photobacterium profundum (strain SS9)).